A 428-amino-acid polypeptide reads, in one-letter code: Putative oxidoreductase YteT (428 aa).

Positions M1–E23 are cleaved as a signal peptide.

Belongs to the Gfo/Idh/MocA family.

In terms of biological role, may play a role in the degradation of type I rhamnogalacturonan derived from plant cell walls. In Bacillus subtilis (strain 168), this protein is Putative oxidoreductase YteT (yteT).